Reading from the N-terminus, the 336-residue chain is Phospho-N-acetylmuramoyl-pentapeptide-transferase (336 aa).

10 helical membrane passes run 3 to 23 (LTLI…PYFI), 53 to 73 (GGTV…LFSI), 78 to 98 (SLAL…IGFL), 118 to 138 (LALQ…PSGI), 143 to 163 (VFGY…FWVV), 174 to 194 (GIDG…GVIA), 200 to 220 (FDVL…FCFN), 226 to 246 (VFMG…ISIA), 251 to 271 (WTLL…MLQV), and 316 to 336 (AFLW…LYVF).

It belongs to the glycosyltransferase 4 family. MraY subfamily. The cofactor is Mg(2+).

It localises to the cell membrane. It carries out the reaction UDP-N-acetyl-alpha-D-muramoyl-L-alanyl-gamma-D-glutamyl-L-lysyl-D-alanyl-D-alanine + di-trans,octa-cis-undecaprenyl phosphate = Mur2Ac(oyl-L-Ala-gamma-D-Glu-L-Lys-D-Ala-D-Ala)-di-trans,octa-cis-undecaprenyl diphosphate + UMP. Its pathway is cell wall biogenesis; peptidoglycan biosynthesis. In terms of biological role, catalyzes the initial step of the lipid cycle reactions in the biosynthesis of the cell wall peptidoglycan: transfers peptidoglycan precursor phospho-MurNAc-pentapeptide from UDP-MurNAc-pentapeptide onto the lipid carrier undecaprenyl phosphate, yielding undecaprenyl-pyrophosphoryl-MurNAc-pentapeptide, known as lipid I. The sequence is that of Phospho-N-acetylmuramoyl-pentapeptide-transferase from Streptococcus pyogenes serotype M49 (strain NZ131).